The chain runs to 100 residues: NADH-quinone oxidoreductase subunit K (100 aa).

Helical transmembrane passes span 4–24, 28–48, and 60–80; these read LQHG…GLVI, LLFM…AFVV, and IMYI…LALL.

The protein belongs to the complex I subunit 4L family. As to quaternary structure, NDH-1 is composed of 13 different subunits. Subunits NuoA, H, J, K, L, M, N constitute the membrane sector of the complex.

The protein localises to the cell inner membrane. It carries out the reaction a quinone + NADH + 5 H(+)(in) = a quinol + NAD(+) + 4 H(+)(out). Functionally, NDH-1 shuttles electrons from NADH, via FMN and iron-sulfur (Fe-S) centers, to quinones in the respiratory chain. The immediate electron acceptor for the enzyme in this species is believed to be ubiquinone. Couples the redox reaction to proton translocation (for every two electrons transferred, four hydrogen ions are translocated across the cytoplasmic membrane), and thus conserves the redox energy in a proton gradient. This chain is NADH-quinone oxidoreductase subunit K, found in Cronobacter sakazakii (strain ATCC BAA-894) (Enterobacter sakazakii).